Consider the following 362-residue polypeptide: Heat-inducible transcription repressor HrcA (362 aa).

Belongs to the HrcA family.

Functionally, negative regulator of class I heat shock genes (grpE-dnaK-dnaJ and groELS operons). Prevents heat-shock induction of these operons. This chain is Heat-inducible transcription repressor HrcA, found in Rhizobium johnstonii (strain DSM 114642 / LMG 32736 / 3841) (Rhizobium leguminosarum bv. viciae).